The sequence spans 245 residues: Cysteine-rich secretory protein 3 (245 aa).

The signal sequence occupies residues 1-20; sequence MTLFPVLLFLVAGLLPSFPA. One can recognise an SCP domain in the interval 43-171; it reads VNKHNELRRA…VLKYYYVCQY (129 aa). Cystine bridges form between C191–C198, C194–C203, C207–C240, C216–C234, and C225–C238. In terms of domain architecture, ShKT spans 207-240; sequence CKYEDLYSNCKSLKLTLTCKHQLVRDSCKASCNC. A glycan (N-linked (GlcNAc...) asparagine) is linked at N239.

The protein belongs to the CRISP family. Interacts with A1BG. In terms of tissue distribution, salivary gland, pancreas and prostate &gt; epididymis, ovary, thymus and colon.

It is found in the secreted. The sequence is that of Cysteine-rich secretory protein 3 (CRISP3) from Homo sapiens (Human).